The primary structure comprises 507 residues: Glucose-6-phosphate isomerase (507 aa).

The active-site Proton donor is the E338. Residues H369 and K479 contribute to the active site.

It belongs to the GPI family.

It localises to the cytoplasm. The catalysed reaction is alpha-D-glucose 6-phosphate = beta-D-fructose 6-phosphate. It participates in carbohydrate biosynthesis; gluconeogenesis. Its pathway is carbohydrate degradation; glycolysis; D-glyceraldehyde 3-phosphate and glycerone phosphate from D-glucose: step 2/4. Functionally, provides a gateway for fructose into the Entner-Doudouroff pathway. In terms of biological role, catalyzes the reversible isomerization of glucose-6-phosphate to fructose-6-phosphate. The polypeptide is Glucose-6-phosphate isomerase (Zymomonas mobilis subsp. mobilis (strain ATCC 31821 / ZM4 / CP4)).